A 430-amino-acid polypeptide reads, in one-letter code: Tol-Pal system protein TolB (430 aa).

A signal peptide spans 1–19 (MKKQIFFTLILLISGLARA).

It belongs to the TolB family. In terms of assembly, the Tol-Pal system is composed of five core proteins: the inner membrane proteins TolA, TolQ and TolR, the periplasmic protein TolB and the outer membrane protein Pal. They form a network linking the inner and outer membranes and the peptidoglycan layer.

The protein resides in the periplasm. Its function is as follows. Part of the Tol-Pal system, which plays a role in outer membrane invagination during cell division and is important for maintaining outer membrane integrity. The protein is Tol-Pal system protein TolB of Hahella chejuensis (strain KCTC 2396).